The primary structure comprises 180 residues: UPF0340 protein LACR_0494 (180 aa).

It belongs to the UPF0340 family.

The sequence is that of UPF0340 protein LACR_0494 from Lactococcus lactis subsp. cremoris (strain SK11).